Consider the following 945-residue polypeptide: Oxysterol-binding protein homolog C23H4.01c (945 aa).

One can recognise a GOLD domain in the interval 1 to 131; it reads METVEIRSKS…PKTVTFLLTA (131 aa). Positions 149-243 constitute a PH domain; that stretch reads KQIISGTLLK…WCNALEKAKN (95 aa). Ser-288, Ser-419, and Ser-421 each carry phosphoserine. 2 disordered regions span residues 396–555 and 846–894; these read ESGA…LPHS and LEKD…MEEK. Positions 443 to 454 are enriched in low complexity; the sequence is TSSISDTSSNSS. Residues 460–470 show a composition bias toward polar residues; it reads LNATSLASTVD. The segment covering 482 to 499 has biased composition (basic and acidic residues); that stretch reads ESNKENDIKRKQPFHDLM. Ser-503 bears the Phosphoserine mark.

It belongs to the OSBP family.

The protein resides in the cytoplasm. The protein is Oxysterol-binding protein homolog C23H4.01c of Schizosaccharomyces pombe (strain 972 / ATCC 24843) (Fission yeast).